We begin with the raw amino-acid sequence, 356 residues long: Chorismate synthase (356 aa).

Arginine 48 and arginine 54 together coordinate NADP(+). Residues 125 to 127 (RSS), 237 to 238 (NA), glycine 282, 297 to 301 (KPTSS), and arginine 323 each bind FMN.

This sequence belongs to the chorismate synthase family. In terms of assembly, homotetramer. It depends on FMNH2 as a cofactor.

It carries out the reaction 5-O-(1-carboxyvinyl)-3-phosphoshikimate = chorismate + phosphate. Its pathway is metabolic intermediate biosynthesis; chorismate biosynthesis; chorismate from D-erythrose 4-phosphate and phosphoenolpyruvate: step 7/7. Its function is as follows. Catalyzes the anti-1,4-elimination of the C-3 phosphate and the C-6 proR hydrogen from 5-enolpyruvylshikimate-3-phosphate (EPSP) to yield chorismate, which is the branch point compound that serves as the starting substrate for the three terminal pathways of aromatic amino acid biosynthesis. This reaction introduces a second double bond into the aromatic ring system. The protein is Chorismate synthase of Rhizorhabdus wittichii (strain DSM 6014 / CCUG 31198 / JCM 15750 / NBRC 105917 / EY 4224 / RW1) (Sphingomonas wittichii).